The chain runs to 236 residues: Protein N-lysine methyltransferase METTL21A (236 aa).

S-adenosyl-L-methionine-binding positions include W47, 73–75 (GAG), D112, W143, and A161.

This sequence belongs to the methyltransferase superfamily. METTL21 family. Interacts with heat shock 70 family members; at least some of these proteins are methylation substrates.

The protein localises to the cytoplasm. The catalysed reaction is L-lysyl-[protein] + 3 S-adenosyl-L-methionine = N(6),N(6),N(6)-trimethyl-L-lysyl-[protein] + 3 S-adenosyl-L-homocysteine + 3 H(+). Its function is as follows. Protein-lysine methyltransferase that selectively trimethylates residues in heat shock protein 70 (HSP70) family members. Contributes to the in vivo trimethylation of Lys residues in HSPA1 and HSPA8. In vitro methylates 'Lys-561' in HSPA1, 'Lys-564' in HSPA2, 'Lys-585' in HSPA5, 'Lys-563' in HSPA6 and 'Lys-561' in HSPA8. In Pongo abelii (Sumatran orangutan), this protein is Protein N-lysine methyltransferase METTL21A (METTL21A).